A 237-amino-acid polypeptide reads, in one-letter code: 7-cyano-7-deazaguanine synthase (237 aa).

9 to 19 contacts ATP; that stretch reads YSGGLDSTTCL. The Zn(2+) site is built by C189, C199, C202, and C205.

The protein belongs to the QueC family. Zn(2+) serves as cofactor.

The catalysed reaction is 7-carboxy-7-deazaguanine + NH4(+) + ATP = 7-cyano-7-deazaguanine + ADP + phosphate + H2O + H(+). It functions in the pathway purine metabolism; 7-cyano-7-deazaguanine biosynthesis. Catalyzes the ATP-dependent conversion of 7-carboxy-7-deazaguanine (CDG) to 7-cyano-7-deazaguanine (preQ(0)). This chain is 7-cyano-7-deazaguanine synthase, found in Geobacter sulfurreducens (strain ATCC 51573 / DSM 12127 / PCA).